We begin with the raw amino-acid sequence, 398 residues long: Small ribosomal subunit protein mS29 (398 aa).

The transit peptide at 1 to 21 (MMLKGITRLISRIHKLDPGRF) directs the protein to the mitochondrion. A disordered region spans residues 39–67 (QVPVESPRAISRTNENDPAKHGDQHEGQH). Basic and acidic residues predominate over residues 52–66 (NENDPAKHGDQHEGQ). GTP-binding positions include Met100 and 128 to 135 (GEKGTGKT). 2 positions are modified to N6-acetyllysine: Lys175 and Lys207.

Belongs to the mitochondrion-specific ribosomal protein mS29 family. Component of the mitochondrial small ribosomal subunit (mt-SSU). Mature mammalian 55S mitochondrial ribosomes consist of a small (28S) and a large (39S) subunit. The 28S small subunit contains a 12S ribosomal RNA (12S mt-rRNA) and 30 different proteins. The 39S large subunit contains a 16S rRNA (16S mt-rRNA), a copy of mitochondrial valine transfer RNA (mt-tRNA(Val)), which plays an integral structural role, and 52 different proteins. Interacts with DELE1. Interacts with NOA1. As to expression, ubiquitous.

The protein resides in the mitochondrion. It carries out the reaction GTP + H2O = GDP + phosphate + H(+). Functionally, as a component of the mitochondrial small ribosomal subunit, it plays a role in the translation of mitochondrial mRNAs. Involved in mediating interferon-gamma-induced cell death. Displays GTPase activity in vitro. The polypeptide is Small ribosomal subunit protein mS29 (Homo sapiens (Human)).